We begin with the raw amino-acid sequence, 660 residues long: DNA ligase (660 aa).

NAD(+)-binding positions include aspartate 33–aspartate 37, serine 82–leucine 83, and glutamate 110. Lysine 112 (N6-AMP-lysine intermediate) is an active-site residue. The NAD(+) site is built by arginine 133, glutamate 167, lysine 281, and lysine 305. Residues cysteine 396, cysteine 399, cysteine 412, and cysteine 417 each contribute to the Zn(2+) site. The region spanning glycine 583–aspartate 660 is the BRCT domain.

The protein belongs to the NAD-dependent DNA ligase family. LigA subfamily. Mg(2+) serves as cofactor. Mn(2+) is required as a cofactor.

It catalyses the reaction NAD(+) + (deoxyribonucleotide)n-3'-hydroxyl + 5'-phospho-(deoxyribonucleotide)m = (deoxyribonucleotide)n+m + AMP + beta-nicotinamide D-nucleotide.. DNA ligase that catalyzes the formation of phosphodiester linkages between 5'-phosphoryl and 3'-hydroxyl groups in double-stranded DNA using NAD as a coenzyme and as the energy source for the reaction. It is essential for DNA replication and repair of damaged DNA. The sequence is that of DNA ligase from Borreliella burgdorferi (strain ZS7) (Borrelia burgdorferi).